Consider the following 355-residue polypeptide: Peptide chain release factor 1 (355 aa).

Residue glutamine 231 is modified to N5-methylglutamine. Basic and acidic residues predominate over residues 280–293 (KERKAKEQSERKDQ). A disordered region spans residues 280–307 (KERKAKEQSERKDQVGTGDRSGRIRTYN).

Belongs to the prokaryotic/mitochondrial release factor family. Post-translationally, methylated by PrmC. Methylation increases the termination efficiency of RF1.

Its subcellular location is the cytoplasm. In terms of biological role, peptide chain release factor 1 directs the termination of translation in response to the peptide chain termination codons UAG and UAA. The chain is Peptide chain release factor 1 from Campylobacter hominis (strain ATCC BAA-381 / DSM 21671 / CCUG 45161 / LMG 19568 / NCTC 13146 / CH001A).